Reading from the N-terminus, the 261-residue chain is Indole-3-glycerol phosphate synthase (261 aa).

It belongs to the TrpC family.

It carries out the reaction 1-(2-carboxyphenylamino)-1-deoxy-D-ribulose 5-phosphate + H(+) = (1S,2R)-1-C-(indol-3-yl)glycerol 3-phosphate + CO2 + H2O. It participates in amino-acid biosynthesis; L-tryptophan biosynthesis; L-tryptophan from chorismate: step 4/5. In Burkholderia mallei (strain NCTC 10247), this protein is Indole-3-glycerol phosphate synthase.